The following is a 257-amino-acid chain: Pimeloyl-[acyl-carrier protein] methyl ester esterase (257 aa).

An AB hydrolase-1 domain is found at 16–240 (LVLIHGWGMN…EQASHAPFIS (225 aa)). Substrate is bound by residues W22, 82–83 (SL), and 143–147 (FMALQ). The active-site Nucleophile is the S82. Active-site residues include D207 and H235. H235 serves as a coordination point for substrate.

The protein belongs to the AB hydrolase superfamily. Carboxylesterase BioH family. In terms of assembly, monomer.

The protein resides in the cytoplasm. It carries out the reaction 6-carboxyhexanoyl-[ACP] methyl ester + H2O = 6-carboxyhexanoyl-[ACP] + methanol + H(+). It participates in cofactor biosynthesis; biotin biosynthesis. The physiological role of BioH is to remove the methyl group introduced by BioC when the pimeloyl moiety is complete. It allows to synthesize pimeloyl-ACP via the fatty acid synthetic pathway through the hydrolysis of the ester bonds of pimeloyl-ACP esters. This Aliivibrio fischeri (strain ATCC 700601 / ES114) (Vibrio fischeri) protein is Pimeloyl-[acyl-carrier protein] methyl ester esterase.